A 76-amino-acid chain; its full sequence is DNA-directed RNA polymerase subunit epsilon (76 aa).

Belongs to the RNA polymerase subunit epsilon family. RNAP is composed of a core of 2 alpha, a beta and a beta' subunit. The core is associated with a delta subunit, and at least one of epsilon or omega. When a sigma factor is associated with the core the holoenzyme is formed, which can initiate transcription.

It catalyses the reaction RNA(n) + a ribonucleoside 5'-triphosphate = RNA(n+1) + diphosphate. In terms of biological role, a non-essential component of RNA polymerase (RNAP). In Lactococcus lactis subsp. lactis (strain IL1403) (Streptococcus lactis), this protein is DNA-directed RNA polymerase subunit epsilon.